The chain runs to 120 residues: Large ribosomal subunit protein uL18 (120 aa).

It belongs to the universal ribosomal protein uL18 family. In terms of assembly, part of the 50S ribosomal subunit; part of the 5S rRNA/L5/L18/L25 subcomplex. Contacts the 5S and 23S rRNAs.

Its function is as follows. This is one of the proteins that bind and probably mediate the attachment of the 5S RNA into the large ribosomal subunit, where it forms part of the central protuberance. The protein is Large ribosomal subunit protein uL18 of Brevibacillus brevis (strain 47 / JCM 6285 / NBRC 100599).